Here is a 228-residue protein sequence, read N- to C-terminus: 7-cyano-7-deazaguanine synthase (228 aa).

10–20 (FSGGQDSTTLA) serves as a coordination point for ATP. Positions 190, 205, 208, and 211 each coordinate Zn(2+).

It belongs to the QueC family. Zn(2+) serves as cofactor.

It carries out the reaction 7-carboxy-7-deazaguanine + NH4(+) + ATP = 7-cyano-7-deazaguanine + ADP + phosphate + H2O + H(+). It participates in purine metabolism; 7-cyano-7-deazaguanine biosynthesis. Functionally, catalyzes the ATP-dependent conversion of 7-carboxy-7-deazaguanine (CDG) to 7-cyano-7-deazaguanine (preQ(0)). This chain is 7-cyano-7-deazaguanine synthase, found in Helicobacter pylori (strain P12).